The sequence spans 163 residues: 2,3-dimethylmalate dehydratase small subunit (163 aa).

This sequence belongs to the LeuD family. LeuD type 2 subfamily. Heterodimer of a large and a small subunit.

It carries out the reaction (2R,3S)-2,3-dimethylmalate = dimethylmaleate + H2O. It functions in the pathway cofactor degradation; nicotinate degradation; propanoate and pyruvate from 6-hydroxynicotinate: step 7/8. This chain is 2,3-dimethylmalate dehydratase small subunit, found in Eubacterium barkeri (Clostridium barkeri).